Here is a 391-residue protein sequence, read N- to C-terminus: Succinate--CoA ligase [ADP-forming] subunit beta (391 aa).

The ATP-grasp domain maps to 9–248; it reads KDILRKFGVA…ITEEDPFEVE (240 aa). ATP is bound by residues Lys-50, 57-59, Glu-103, Met-106, and Glu-111; that span reads GRG. The Mg(2+) site is built by Asn-203 and Asp-217. Substrate-binding positions include Asn-268 and 325-327; that span reads GIV.

This sequence belongs to the succinate/malate CoA ligase beta subunit family. As to quaternary structure, heterotetramer of two alpha and two beta subunits. Requires Mg(2+) as cofactor.

It carries out the reaction succinate + ATP + CoA = succinyl-CoA + ADP + phosphate. The catalysed reaction is GTP + succinate + CoA = succinyl-CoA + GDP + phosphate. It participates in carbohydrate metabolism; tricarboxylic acid cycle; succinate from succinyl-CoA (ligase route): step 1/1. Functionally, succinyl-CoA synthetase functions in the citric acid cycle (TCA), coupling the hydrolysis of succinyl-CoA to the synthesis of either ATP or GTP and thus represents the only step of substrate-level phosphorylation in the TCA. The beta subunit provides nucleotide specificity of the enzyme and binds the substrate succinate, while the binding sites for coenzyme A and phosphate are found in the alpha subunit. The sequence is that of Succinate--CoA ligase [ADP-forming] subunit beta from Chlorobium phaeovibrioides (strain DSM 265 / 1930) (Prosthecochloris vibrioformis (strain DSM 265)).